A 193-amino-acid polypeptide reads, in one-letter code: ATP-dependent protease subunit HslV (193 aa).

Residue Thr12 is part of the active site. Positions 167, 170, and 173 each coordinate Na(+).

This sequence belongs to the peptidase T1B family. HslV subfamily. A double ring-shaped homohexamer of HslV is capped on each side by a ring-shaped HslU homohexamer. The assembly of the HslU/HslV complex is dependent on binding of ATP.

It is found in the cytoplasm. The catalysed reaction is ATP-dependent cleavage of peptide bonds with broad specificity.. With respect to regulation, allosterically activated by HslU binding. Its function is as follows. Protease subunit of a proteasome-like degradation complex believed to be a general protein degrading machinery. This Bartonella quintana (strain Toulouse) (Rochalimaea quintana) protein is ATP-dependent protease subunit HslV.